Here is a 504-residue protein sequence, read N- to C-terminus: Sucrose phosphorylase (504 aa).

Position 50 (Asp-50) interacts with substrate. Sucrose is bound by residues His-88, 190 to 192 (RLD), Glu-232, 289 to 290 (HD), 342 to 345 (DLYQ), and Arg-399. The active-site Nucleophile is Asp-192. Glu-232 serves as the catalytic Proton donor.

The protein belongs to the glycosyl hydrolase 13 family. Sucrose phosphorylase subfamily. Homodimer.

It catalyses the reaction sucrose + phosphate = D-fructose + alpha-D-glucose 1-phosphate. Its function is as follows. Catalyzes the reversible phosphorolysis of sucrose into alpha-D-glucose 1-phosphate (Glc1P) and D-fructose. Is involved in sucrose degradation. Also displays transglucosylation activity in vitro, by transferring the glucosyl moiety of Glc1P to a broad range of monomeric sugars, such as D- and L-arabinose, D- and L-arabitol, and xylitol. The polypeptide is Sucrose phosphorylase (Bifidobacterium adolescentis (strain ATCC 15703 / DSM 20083 / NCTC 11814 / E194a)).